We begin with the raw amino-acid sequence, 342 residues long: RNA 3'-terminal phosphate cyclase (342 aa).

ATP contacts are provided by residues Gln102 and 283–287; that span reads HLADQ. The Tele-AMP-histidine intermediate role is filled by His308.

Belongs to the RNA 3'-terminal cyclase family. Type 1 subfamily.

The protein localises to the cytoplasm. It catalyses the reaction a 3'-end 3'-phospho-ribonucleotide-RNA + ATP = a 3'-end 2',3'-cyclophospho-ribonucleotide-RNA + AMP + diphosphate. In terms of biological role, catalyzes the conversion of 3'-phosphate to a 2',3'-cyclic phosphodiester at the end of RNA. The mechanism of action of the enzyme occurs in 3 steps: (A) adenylation of the enzyme by ATP; (B) transfer of adenylate to an RNA-N3'P to produce RNA-N3'PP5'A; (C) and attack of the adjacent 2'-hydroxyl on the 3'-phosphorus in the diester linkage to produce the cyclic end product. The biological role of this enzyme is unknown but it is likely to function in some aspects of cellular RNA processing. In Pseudomonas fluorescens (strain ATCC BAA-477 / NRRL B-23932 / Pf-5), this protein is RNA 3'-terminal phosphate cyclase.